A 1141-amino-acid chain; its full sequence is DNA-directed RNA polymerase subunit beta (1141 aa).

This sequence belongs to the RNA polymerase beta chain family. As to quaternary structure, the RNAP catalytic core consists of 2 alpha, 1 beta, 1 beta' and 1 omega subunit. When a sigma factor is associated with the core the holoenzyme is formed, which can initiate transcription.

It carries out the reaction RNA(n) + a ribonucleoside 5'-triphosphate = RNA(n+1) + diphosphate. In terms of biological role, DNA-dependent RNA polymerase catalyzes the transcription of DNA into RNA using the four ribonucleoside triphosphates as substrates. This Frankia casuarinae (strain DSM 45818 / CECT 9043 / HFP020203 / CcI3) protein is DNA-directed RNA polymerase subunit beta.